Here is a 419-residue protein sequence, read N- to C-terminus: UDP-N-acetylglucosamine 1-carboxyvinyltransferase (419 aa).

Residue 22–23 (KN) coordinates phosphoenolpyruvate. Arginine 92 serves as a coordination point for UDP-N-acetyl-alpha-D-glucosamine. Cysteine 116 (proton donor) is an active-site residue. Cysteine 116 is modified (2-(S-cysteinyl)pyruvic acid O-phosphothioketal). Residues aspartate 306 and isoleucine 328 each coordinate UDP-N-acetyl-alpha-D-glucosamine.

The protein belongs to the EPSP synthase family. MurA subfamily.

The protein resides in the cytoplasm. The enzyme catalyses phosphoenolpyruvate + UDP-N-acetyl-alpha-D-glucosamine = UDP-N-acetyl-3-O-(1-carboxyvinyl)-alpha-D-glucosamine + phosphate. Its pathway is cell wall biogenesis; peptidoglycan biosynthesis. Its function is as follows. Cell wall formation. Adds enolpyruvyl to UDP-N-acetylglucosamine. This Pseudoalteromonas translucida (strain TAC 125) protein is UDP-N-acetylglucosamine 1-carboxyvinyltransferase.